A 230-amino-acid chain; its full sequence is Ion-translocating oxidoreductase complex subunit E (230 aa).

A run of 5 helical transmembrane segments spans residues 39-59 (LGLG…VSLV), 69-89 (IPVF…LMNA), 93-113 (GLYL…IIIG), 124-144 (VLPA…VLVV), and 182-202 (AFLL…LIAA).

This sequence belongs to the NqrDE/RnfAE family. The complex is composed of six subunits: RnfA, RnfB, RnfC, RnfD, RnfE and RnfG.

It is found in the cell inner membrane. Functionally, part of a membrane-bound complex that couples electron transfer with translocation of ions across the membrane. The polypeptide is Ion-translocating oxidoreductase complex subunit E (Vibrio cholerae serotype O1 (strain ATCC 39315 / El Tor Inaba N16961)).